We begin with the raw amino-acid sequence, 385 residues long: m7GpppN-mRNA hydrolase (385 aa).

Residues 95-226 (MGVPTYGAII…KLGLAPNKFF (132 aa)) enclose the Nudix hydrolase domain. The short motif at 129–150 (GKVNKEEAPHDCAAREVFEETG) is the Nudix box element. Positions 144 and 148 each coordinate Mn(2+). Ser246, Ser247, Ser249, Ser276, and Ser284 each carry phosphoserine. A disordered region spans residues 247–266 (SDSDNGFSSTGSTPAKPTVE). The segment covering 249–259 (SDNGFSSTGST) has biased composition (low complexity).

The protein belongs to the Nudix hydrolase family. DCP2 subfamily. Found in a mRNA decay complex with LSM1, LSM3, LSM4, EXOSC2, EXOSC4, EXOSC10, PARN, XRN1, CNOT6, UPF1, UPF2 and UPF3B. Forms a complex with DCP1A, EDC3, DDX6 and EDC4/HEDLS, within this complex directly interacts with EDC4/HEDLS. Interacts with DPC1B, UPF1, UPF2 and UPF3B. Associates with polysomes. Interacts (via N-terminus and C-terminus) with TRIM21 (via N-terminus and C-terminus). Interacts with LIMD1, WTIP and AJUBA. Interacts with DDX17 in an RNA-dependent manner. Interacts with ZC3HAV1. Interacts with APOBEC3G in an RNA-dependent manner. Interacts with ZFP36L1 (via N-terminus). Interacts with NBDY. The cofactor is Mn(2+). Requires Mg(2+) as cofactor.

The protein localises to the cytoplasm. The protein resides in the P-body. It localises to the nucleus. It carries out the reaction a 5'-end (N(7)-methyl 5'-triphosphoguanosine)-ribonucleoside in mRNA + H2O = N(7)-methyl-GDP + a 5'-end phospho-ribonucleoside in mRNA + 2 H(+). In terms of biological role, decapping metalloenzyme that catalyzes the cleavage of the cap structure on mRNAs. Removes the 7-methyl guanine cap structure from mRNA molecules, yielding a 5'-phosphorylated mRNA fragment and 7m-GDP. Necessary for the degradation of mRNAs, both in normal mRNA turnover and in nonsense-mediated mRNA decay. Plays a role in replication-dependent histone mRNA degradation. Has higher activity towards mRNAs that lack a poly(A) tail. Has no activity towards a cap structure lacking an RNA moiety. The presence of a N(6)-methyladenosine methylation at the second transcribed position of mRNAs (N(6),2'-O-dimethyladenosine cap; m6A(m)) provides resistance to DCP2-mediated decapping. Blocks autophagy in nutrient-rich conditions by repressing the expression of ATG-related genes through degradation of their transcripts. The polypeptide is m7GpppN-mRNA hydrolase (DCP2) (Pongo abelii (Sumatran orangutan)).